Here is a 247-residue protein sequence, read N- to C-terminus: LHFPL tetraspan subfamily member 4 protein (247 aa).

Helical transmembrane passes span 22–42 (IGVL…VVFI), 97–117 (FFVL…ALFF), 127–147 (ICAW…MIFP), and 178–198 (ILAI…FVLG).

This sequence belongs to the LHFP family. Interacts with GABA(A) receptor subunits. Interacts with GABRB3. Interacts with GABRA2. Interacts with GABRG2. Interacts with GABRA1. Identified in a complex of 720 kDa composed of LHFPL4, NLGN2, GABRA1, GABRB2, GABRG2 and GABRB3. Interacts with NLGN2; leading to mutual regulation of protein level and synaptic clustering. As to expression, highly expressed in the brain, including the cortex, hippocampus, midbrain, olfactory bulb pona plus medulla (at protein level). Expressed in the in the cerebellar granular layer and in granular layer. Colocalized with GPHN at inhibitory synapses. Weakly expressed in heart, testis, lung, intestine, vagina, ovary and uterus.

It localises to the cell projection. The protein resides in the dendrite. It is found in the postsynaptic cell membrane. In terms of biological role, plays a role in the regulation of inhibitory synapse formation and function by being involved in maintening gamma-aminobutyric acid receptors (GABAARs) clustering and their associated scaffold proteins at inhibitory synaptic sites. Acts in concert with NLGN2 to recruit or stabilize GABAARs. The chain is LHFPL tetraspan subfamily member 4 protein from Mus musculus (Mouse).